The sequence spans 157 residues: Putative low molecular weight protein-tyrosine-phosphatase slr0328 (157 aa).

The active-site Nucleophile is Cys7. Residue Arg13 is part of the active site. The active-site Proton donor is Asp124.

The protein belongs to the low molecular weight phosphotyrosine protein phosphatase family.

It catalyses the reaction O-phospho-L-tyrosyl-[protein] + H2O = L-tyrosyl-[protein] + phosphate. The polypeptide is Putative low molecular weight protein-tyrosine-phosphatase slr0328 (Synechocystis sp. (strain ATCC 27184 / PCC 6803 / Kazusa)).